Here is a 609-residue protein sequence, read N- to C-terminus: MSGWESYYKTEGDEEAEEEQEENLEASGDYKYSGRDSLIFLVDASKAMFESQSEDELTPFDMSIQCIQSVYISKIISSDRDLLAVVFYGTEKDKNSVNFKNIYVLQELDNPGAKRILELDQFKGQQGQKRFQDMMGHGSDYSLSEVLWVCANLFSDVQFKMSHKRIMLFTNEDNPHGNDSAKASRARTKAGDLRDTGIFLDLMHLKKPGGFDISLFYRDIISIAEDEDLRVHFEESSKLEDLLRKVRAKETRKRALSRLKLKLNKDIVISVGIYNLVQKALKPPPIKLYRETNEPVKTKTRTFNTSTGGLLLPSDTKRSQIYGSRQIILEKEETEELKRFDDPGLMLMGFKPLVLLKKHHYLRPSLFVYPEESLVIGSSTLFSALLIKCLEKEVAALCRYTPRRNIPPYFVALVPQEEELDDQKIQVTPPGFQLVFLPFADDKRKMPFTEKIMATPEQVGKMKAIVEKLRFTYRSDSFENPVLQQHFRNLEALALDLMEPEQAVDLTLPKVEAMNKRLGSLVDEFKELVYPPDYNPEGKVTKRKHDNEGSGSKRPKVEYSEEELKTHISKGTLGKFTVPMLKEACRAYGLKSGLKKQELLEALTKHFQD.

Residues 1–28 form a disordered region; the sequence is MSGWESYYKTEGDEEAEEEQEENLEASG. S2 carries the post-translational modification N-acetylserine. Residue S2 is modified to Phosphoserine. S6 is subject to Phosphoserine; by PRKDC. The segment covering 12-24 has biased composition (acidic residues); it reads GDEEAEEEQEENL. The residue at position 27 (S27) is a Phosphoserine. The active-site Schiff-base intermediate with DNA; for 5'-deoxyribose-5-phosphate lyase activity is K31. K31 carries the N6-acetyllysine modification. The residue at position 51 (S51) is a Phosphoserine; by PRKDC. Positions 261–468 constitute a Ku domain; the sequence is LKLNKDIVIS…VGKMKAIVEK (208 aa). Positions 277 to 341 are DNA-binding; that stretch reads VQKALKPPPI…EETEELKRFD (65 aa). Residue K287 forms a Glycyl lysine isopeptide (Lys-Gly) (interchain with G-Cter in SUMO2) linkage. S306 bears the Phosphoserine mark. N6-acetyllysine is present on residues K317, K331, and K338. A Glycyl lysine isopeptide (Lys-Gly) (interchain with G-Cter in SUMO2) cross-link involves residue K317. Residues 373–482 form an interaction with XRCC5 region; sequence SLVIGSSTLF…YRSDSFENPV (110 aa). T455 is subject to Phosphothreonine. K461 carries the N6-acetyllysine modification. 2 positions are modified to phosphoserine: S477 and S520. Residues 536-562 form a disordered region; sequence PEGKVTKRKHDNEGSGSKRPKVEYSEE. 3 positions are modified to N6-acetyllysine: K539, K542, and K544. S550 is subject to Phosphoserine. The interval 550-609 is interaction with DEAF1; that stretch reads SGSKRPKVEYSEEELKTHISKGTLGKFTVPMLKEACRAYGLKSGLKKQELLEALTKHFQD. Residues K553 and K556 each carry the N6-acetyllysine modification. Residue K556 forms a Glycyl lysine isopeptide (Lys-Gly) (interchain with G-Cter in SUMO2) linkage. S560 carries the post-translational modification Phosphoserine. An N6,N6,N6-trimethyllysine modification is found at K570. In terms of domain architecture, SAP spans 573 to 607; it reads LGKFTVPMLKEACRAYGLKSGLKKQELLEALTKHF. Residues 578-583 are interaction with BAX; the sequence is VPMLKE.

The protein belongs to the ku70 family. Forms a heterodimer with XRCC5/Ku80; heterodimerization stabilizes XRCC5 protein. Component of the core long-range non-homologous end joining (NHEJ) complex (also named DNA-PK complex) composed of PRKDC, LIG4, XRCC4, XRCC6/Ku70, XRCC5/Ku86 and NHEJ1/XLF. Additional component of the NHEJ complex includes PAXX. Following autophosphorylation, PRKDC dissociates from DNA, leading to formation of the short-range NHEJ complex, composed of LIG4, XRCC4, XRCC6/Ku70, XRCC5/Ku86 and NHEJ1/XLF. The XRCC5-XRCC6 dimer also associates with NAA15, and this complex binds to the osteocalcin promoter and activates osteocalcin expression. In addition, XRCC6 interacts with the osteoblast-specific transcription factors MSX2, RUNX2 and DLX5. Interacts with ELF3. Interacts with ATP23. The XRCC5-XRRC6 dimer associates in a DNA-dependent manner with APEX1. Binds to CDK9 isoform 2. Identified in a complex with DEAF1 and XRCC5. Interacts with DEAF1 (via the SAND domain); the interaction is direct and may be inhibited by DNA-binding. Interacts with CLU. Interacts with NR4A3; the DNA-dependent protein kinase complex DNA-PK phosphorylates and activates NR4A3 and prevents NR4A3 ubiquitinylation and degradation. Interacts with CYREN isoform 1 (CYREN-1) and isoform 4 (CYREN-2) (via KBM motif). Interacts (via N-terminus) with HSF1 (via N-terminus); this interaction is direct and prevents XRCC5/XRCC6 heterodimeric binding and non-homologous end joining (NHEJ) repair activities induced by ionizing radiation (IR). Part of the HDP-RNP complex composed of at least HEXIM1, PRKDC, XRCC5, XRCC6, paraspeckle proteins (SFPQ, NONO, PSPC1, RBM14, and MATR3) and NEAT1 RNA. Interacts with HMBOX1. Interacts with ATF7. Interacts with APLF (via KBM motif). Interacts with WRN (via KBM motif). The XRCC5-XRCC6 dimer associates with ALKBH2. Interacts with TPRN; TPRN interacts with a number of DNA damage response proteins, is recruited to sites of DNA damage and may play a role in DNA damage repair. When not acetylated, interacts with BAX. Interacts with ERCC6L2. As to quaternary structure, (Microbial infection) Interacts with human T-cell leukemia virus 1/HTLV-1 protein HBZ. In terms of processing, phosphorylation by PRKDC may enhance helicase activity. Phosphorylation of Ser-51 does not affect DNA repair. Post-translationally, ADP-ribosylated by PARP3. Methylation by SETD4 leads to accumulation in the cytoplasm and is a prerequisite for acetylation, possibly due to the change of subcellular from the nucleus to the cytosol initiated by methylation, acetylation occurring in the cytosol. In terms of processing, acetylation can be catalyzed in vitro by CREBBP/CBP and KAT2B/PCAF.

It is found in the nucleus. Its subcellular location is the chromosome. It localises to the cytoplasm. Functionally, single-stranded DNA-dependent ATP-dependent helicase that plays a key role in DNA non-homologous end joining (NHEJ) by recruiting DNA-PK to DNA. Required for double-strand break repair and V(D)J recombination. Also has a role in chromosome translocation. Has a role in chromosome translocation. The DNA helicase II complex binds preferentially to fork-like ends of double-stranded DNA in a cell cycle-dependent manner. It works in the 3'-5' direction. During NHEJ, the XRCC5-XRRC6 dimer performs the recognition step: it recognizes and binds to the broken ends of the DNA and protects them from further resection. Binding to DNA may be mediated by XRCC6. The XRCC5-XRRC6 dimer acts as a regulatory subunit of the DNA-dependent protein kinase complex DNA-PK by increasing the affinity of the catalytic subunit PRKDC to DNA by 100-fold. The XRCC5-XRRC6 dimer is probably involved in stabilizing broken DNA ends and bringing them together. The assembly of the DNA-PK complex to DNA ends is required for the NHEJ ligation step. Probably also acts as a 5'-deoxyribose-5-phosphate lyase (5'-dRP lyase), by catalyzing the beta-elimination of the 5' deoxyribose-5-phosphate at an abasic site near double-strand breaks. 5'-dRP lyase activity allows to 'clean' the termini of abasic sites, a class of nucleotide damage commonly associated with strand breaks, before such broken ends can be joined. The XRCC5-XRRC6 dimer together with APEX1 acts as a negative regulator of transcription. In association with NAA15, the XRCC5-XRRC6 dimer binds to the osteocalcin promoter and activates osteocalcin expression. Plays a role in the regulation of DNA virus-mediated innate immune response by assembling into the HDP-RNP complex, a complex that serves as a platform for IRF3 phosphorylation and subsequent innate immune response activation through the cGAS-STING pathway. Negatively regulates apoptosis by interacting with BAX and sequestering it from the mitochondria. Might have deubiquitination activity, acting on BAX. The chain is X-ray repair cross-complementing protein 6 (XRCC6) from Homo sapiens (Human).